The sequence spans 93 residues: Small ribosomal subunit protein uS19 (93 aa).

Belongs to the universal ribosomal protein uS19 family.

Its function is as follows. Protein S19 forms a complex with S13 that binds strongly to the 16S ribosomal RNA. The sequence is that of Small ribosomal subunit protein uS19 from Pediococcus pentosaceus (strain ATCC 25745 / CCUG 21536 / LMG 10740 / 183-1w).